A 332-amino-acid polypeptide reads, in one-letter code: Holliday junction branch migration complex subunit RuvB (332 aa).

Positions 1 to 181 are large ATPase domain (RuvB-L); sequence MSRILDNEQM…FGITGHMEYY (181 aa). Residues leucine 20, arginine 21, glycine 62, lysine 65, threonine 66, threonine 67, 128-130, arginine 171, tyrosine 181, and arginine 218 each bind ATP; that span reads EDF. Threonine 66 contacts Mg(2+). Residues 182–252 are small ATPAse domain (RuvB-S); that stretch reads EEADLTEIVE…ITDQALSMLD (71 aa). The segment at 255–332 is head domain (RuvB-H); that stretch reads HEGLDYVDQK…EHLGYEYMEK (78 aa). The DNA site is built by arginine 291, arginine 310, arginine 312, and arginine 315.

The protein belongs to the RuvB family. Homohexamer. Forms an RuvA(8)-RuvB(12)-Holliday junction (HJ) complex. HJ DNA is sandwiched between 2 RuvA tetramers; dsDNA enters through RuvA and exits via RuvB. An RuvB hexamer assembles on each DNA strand where it exits the tetramer. Each RuvB hexamer is contacted by two RuvA subunits (via domain III) on 2 adjacent RuvB subunits; this complex drives branch migration. In the full resolvosome a probable DNA-RuvA(4)-RuvB(12)-RuvC(2) complex forms which resolves the HJ.

The protein localises to the cytoplasm. The catalysed reaction is ATP + H2O = ADP + phosphate + H(+). The RuvA-RuvB-RuvC complex processes Holliday junction (HJ) DNA during genetic recombination and DNA repair, while the RuvA-RuvB complex plays an important role in the rescue of blocked DNA replication forks via replication fork reversal (RFR). RuvA specifically binds to HJ cruciform DNA, conferring on it an open structure. The RuvB hexamer acts as an ATP-dependent pump, pulling dsDNA into and through the RuvAB complex. RuvB forms 2 homohexamers on either side of HJ DNA bound by 1 or 2 RuvA tetramers; 4 subunits per hexamer contact DNA at a time. Coordinated motions by a converter formed by DNA-disengaged RuvB subunits stimulates ATP hydrolysis and nucleotide exchange. Immobilization of the converter enables RuvB to convert the ATP-contained energy into a lever motion, pulling 2 nucleotides of DNA out of the RuvA tetramer per ATP hydrolyzed, thus driving DNA branch migration. The RuvB motors rotate together with the DNA substrate, which together with the progressing nucleotide cycle form the mechanistic basis for DNA recombination by continuous HJ branch migration. Branch migration allows RuvC to scan DNA until it finds its consensus sequence, where it cleaves and resolves cruciform DNA. The polypeptide is Holliday junction branch migration complex subunit RuvB (Streptococcus gordonii (strain Challis / ATCC 35105 / BCRC 15272 / CH1 / DL1 / V288)).